A 326-amino-acid polypeptide reads, in one-letter code: Protein phosphatase PTC7 homolog fig (326 aa).

Residues 40-83 (VQGKSKPRSPHLTSPQCSPEHRPRRFRPPSASGRTAFSSAPRPK) are disordered. The PPM-type phosphatase domain occupies 64 to 314 (RFRPPSASGR…DDITVVLASV (251 aa)). Positions 91, 92, and 236 each coordinate Mn(2+).

It belongs to the PP2C family. Mg(2+) serves as cofactor. Mn(2+) is required as a cofactor.

The enzyme catalyses O-phospho-L-seryl-[protein] + H2O = L-seryl-[protein] + phosphate. It catalyses the reaction O-phospho-L-threonyl-[protein] + H2O = L-threonyl-[protein] + phosphate. This chain is Protein phosphatase PTC7 homolog fig, found in Drosophila persimilis (Fruit fly).